We begin with the raw amino-acid sequence, 138 residues long: MKVLGLDVGDKKIGVALSDELGLTAQGLTVIYRTSLKKDLEEIKKIIDLHHVTEVVIGYPRNMNGTAGPRAELVKRFARELYKFTGIKPVFWDERLSTVEAEKLLISGDISRRKRKKVIDKLAATLILSGYLNYKSKN.

The protein belongs to the YqgF nuclease family.

The protein localises to the cytoplasm. Its function is as follows. Could be a nuclease involved in processing of the 5'-end of pre-16S rRNA. The protein is Putative pre-16S rRNA nuclease of Carboxydothermus hydrogenoformans (strain ATCC BAA-161 / DSM 6008 / Z-2901).